Here is a 477-residue protein sequence, read N- to C-terminus: MKILFVAAEGAPFSKTGGLGDVIGALPKSLVKAGHEVAVILPYYDMVEAKFGNQIEDVLHFEVSVGWRRQYCGIKKTVLNGVTFYFIDNQYYFFRGHVYGDFDDGERFAFFQLAAIEAMERIDFIPDLLHVHDYHTAMIPFLLKEKYRWIQAYEDIETVLTIHNLEFQGQFSEGMLGDLFGVGFERYADGTLRWNNCLNWMKAGILYANRVSTVSPSYAHEIMTSQFGCNLDHILKMESGKVSGIVNGIDADLYNPQTDALLDYHFNQEDLSGKAKNKAKLQERVGLPVRADVPLVGIVSRLTRQKGFDVVVESLHHILQEDVQIVLLGTGDPAFEGAFSWFAQIYPDKLSTNITFDVKLAQEIYAACDLFLMPSRFEPCGLSQMMAMRYGTLPLVHEVGGLRDTVRAFNPIEGSGTGFSFDNLSPYWLNWTFQTALDLYRNHPDIWRNLQKQAMESDFSWDTACKSYLDLYHSLVN.

K15 is a binding site for ADP-alpha-D-glucose.

The protein belongs to the glycosyltransferase 1 family. Bacterial/plant glycogen synthase subfamily.

The enzyme catalyses [(1-&gt;4)-alpha-D-glucosyl](n) + ADP-alpha-D-glucose = [(1-&gt;4)-alpha-D-glucosyl](n+1) + ADP + H(+). The protein operates within glycan biosynthesis; glycogen biosynthesis. Functionally, synthesizes alpha-1,4-glucan chains using ADP-glucose. The polypeptide is Glycogen synthase (Streptococcus pneumoniae serotype 2 (strain D39 / NCTC 7466)).